A 330-amino-acid chain; its full sequence is Glycerol-3-phosphate dehydrogenase [NAD(P)+] (330 aa).

4 residues coordinate NADPH: Ser11, Phe12, Arg32, and Lys106. Sn-glycerol 3-phosphate-binding residues include Lys106, Gly133, and Ser135. Ala137 contacts NADPH. 5 residues coordinate sn-glycerol 3-phosphate: Lys188, Asp241, Ser251, Arg252, and Asn253. Lys188 acts as the Proton acceptor in catalysis. Arg252 provides a ligand contact to NADPH. 2 residues coordinate NADPH: Val276 and Glu278.

It belongs to the NAD-dependent glycerol-3-phosphate dehydrogenase family.

The protein localises to the cytoplasm. The catalysed reaction is sn-glycerol 3-phosphate + NAD(+) = dihydroxyacetone phosphate + NADH + H(+). It carries out the reaction sn-glycerol 3-phosphate + NADP(+) = dihydroxyacetone phosphate + NADPH + H(+). The protein operates within membrane lipid metabolism; glycerophospholipid metabolism. Functionally, catalyzes the reduction of the glycolytic intermediate dihydroxyacetone phosphate (DHAP) to sn-glycerol 3-phosphate (G3P), the key precursor for phospholipid synthesis. In Clostridium botulinum (strain Eklund 17B / Type B), this protein is Glycerol-3-phosphate dehydrogenase [NAD(P)+].